Reading from the N-terminus, the 283-residue chain is Glutamate racemase (283 aa).

Substrate contacts are provided by residues 28–29 (DS) and 60–61 (YG). Residue Cys92 is the Proton donor/acceptor of the active site. Residue 93–94 (NT) participates in substrate binding. Cys204 serves as the catalytic Proton donor/acceptor. A substrate-binding site is contributed by 205-206 (TH).

This sequence belongs to the aspartate/glutamate racemases family.

The enzyme catalyses L-glutamate = D-glutamate. It participates in cell wall biogenesis; peptidoglycan biosynthesis. Provides the (R)-glutamate required for cell wall biosynthesis. The sequence is that of Glutamate racemase from Salmonella enteritidis PT4 (strain P125109).